The primary structure comprises 535 residues: EH domain-containing protein 3 (535 aa).

Residue M1 is modified to N-acetylmethionine. Residues 55-286 (FDNKPMVLLV…DLFKDIQSLP (232 aa)) form the Dynamin-type G domain. The interval 65 to 72 (GQYSTGKT) is G1 motif. An ATP-binding site is contributed by 65–72 (GQYSTGKT). Positions 91–92 (EP) are G2 motif. A G3 motif region spans residues 153-156 (DTPG). A coiled-coil region spans residues 198–227 (DEFSEVIKALKNHEDKMRVVLNKADQIETQ). A G4 motif region spans residues 219-222 (NKAD). K220 provides a ligand contact to ATP. A region of interest (G5 motif) is located at residue I243. W258 lines the ATP pocket. A Glycyl lysine isopeptide (Lys-Gly) (interchain with G-Cter in SUMO) cross-link involves residue K315. Phosphoserine occurs at positions 349 and 456. The region spanning 444-532 (DKPMYDEIFY…AHLLPPSKRK (89 aa)) is the EH domain. Positions 476–511 (LPNSVLGKIWKLADIDKDGMLDDEEFALANHLIKVK) constitute an EF-hand domain. D489, D491, D493, M495, and E500 together coordinate Ca(2+). K511 is covalently cross-linked (Glycyl lysine isopeptide (Lys-Gly) (interchain with G-Cter in SUMO)).

This sequence belongs to the TRAFAC class dynamin-like GTPase superfamily. Dynamin/Fzo/YdjA family. EHD subfamily. Homooligomer, and heterooligomer with EHD1, EHD2 and EHD4, ATP-binding is required for heterooligomerization. Interacts with PACSIN1. Interacts with PACSIN2. Interacts (via EH domain) with MICALL1. Interacts (via EH domain) with RAB11FIP2. Interacts with ANK2. Interacts with CACNA1GG and CACNA1H.

It localises to the recycling endosome membrane. The protein resides in the cell membrane. It is found in the cell projection. The protein localises to the cilium membrane. Functionally, ATP- and membrane-binding protein that controls membrane reorganization/tubulation upon ATP hydrolysis. In vitro causes tubulation of endocytic membranes. Binding to phosphatidic acid induces its membrane tubulation activity. Plays a role in endocytic transport. Involved in early endosome to recycling endosome compartment (ERC), retrograde early endosome to Golgi, and endosome to plasma membrane (rapid recycling) protein transport. Involved in the regulation of Golgi maintenance and morphology. Involved in the recycling of internalized D1 dopamine receptor. Plays a role in cardiac protein trafficking probably implicating ANK2. Involved in the ventricular membrane targeting of SLC8A1 and CACNA1C and probably the atrial membrane localization of CACNA1GG and CACNA1H implicated in the regulation of atrial myocyte excitability and cardiac conduction. In conjunction with EHD4 may be involved in endocytic trafficking of KDR/VEGFR2 implicated in control of glomerular function. Involved in the rapid recycling of integrin beta-3 implicated in cell adhesion maintenance. Involved in the unidirectional retrograde dendritic transport of endocytosed BACE1 and in efficient sorting of BACE1 to axons implicating a function in neuronal APP processing. Plays a role in the formation of the ciliary vesicle, an early step in cilium biogenesis; possibly sharing redundant functions with Ehd1. This Rattus norvegicus (Rat) protein is EH domain-containing protein 3.